A 257-amino-acid polypeptide reads, in one-letter code: Steroid 5-alpha-reductase DET2 (257 aa).

The next 6 membrane-spanning stretches (helical) occupy residues Phe11–Thr31, Ile47–Val67, Leu78–Tyr97, Phe110–Ser130, Ile151–Leu171, and Ile200–Val220.

It belongs to the steroid 5-alpha reductase family. As to expression, mostly expressed in leaves and hypocotyls and, to a lower extent, in stems, cotyledons, roots, seeds and callus.

Its subcellular location is the membrane. It catalyses the reaction a 3-oxo-5alpha-steroid + NADP(+) = a 3-oxo-Delta(4)-steroid + NADPH + H(+). The protein operates within plant hormone biosynthesis; brassinosteroid biosynthesis. Its activity is regulated as follows. Repressed by steroid (4-MA, VG106, PD91, PD17, Finasteride) and non-steroid (AS601811, AFA27, AFA76, AFA131, AFA192) inhibitors; steroid inhibitors are generally more efficient. Its function is as follows. Involved in a reduction step in the biosynthesis of the plant steroid, brassinolide (BL). Can use progesterone, testosterone, androstenedione and campestenone as substrate. This Solanum lycopersicum (Tomato) protein is Steroid 5-alpha-reductase DET2.